Reading from the N-terminus, the 157-residue chain is 6,7-dimethyl-8-ribityllumazine synthase (157 aa).

Residues Phe22, 56 to 58, and 81 to 83 each bind 5-amino-6-(D-ribitylamino)uracil; these read AFE and VLI. 86–87 contributes to the (2S)-2-hydroxy-3-oxobutyl phosphate binding site; that stretch reads ET. His89 serves as the catalytic Proton donor. Phe114 lines the 5-amino-6-(D-ribitylamino)uracil pocket. Residue Arg128 participates in (2S)-2-hydroxy-3-oxobutyl phosphate binding.

This sequence belongs to the DMRL synthase family.

It carries out the reaction (2S)-2-hydroxy-3-oxobutyl phosphate + 5-amino-6-(D-ribitylamino)uracil = 6,7-dimethyl-8-(1-D-ribityl)lumazine + phosphate + 2 H2O + H(+). It functions in the pathway cofactor biosynthesis; riboflavin biosynthesis; riboflavin from 2-hydroxy-3-oxobutyl phosphate and 5-amino-6-(D-ribitylamino)uracil: step 1/2. In terms of biological role, catalyzes the formation of 6,7-dimethyl-8-ribityllumazine by condensation of 5-amino-6-(D-ribitylamino)uracil with 3,4-dihydroxy-2-butanone 4-phosphate. This is the penultimate step in the biosynthesis of riboflavin. The chain is 6,7-dimethyl-8-ribityllumazine synthase from Chlamydia muridarum (strain MoPn / Nigg).